The sequence spans 558 residues: Type I restriction enzyme MjaIX methylase subunit (558 aa).

The tract at residues 1–37 (MATLDKFLSIKENDEKTKKKESKKKSSKSNKTSESLV) is disordered. Basic and acidic residues predominate over residues 8 to 18 (LSIKENDEKTK). The span at 19–28 (KKESKKKSSK) shows a compositional bias: basic residues. S-adenosyl-L-methionine is bound by residues 227 to 232 (KFYTPR), 256 to 258 (SGG), and D283.

It belongs to the N(4)/N(6)-methyltransferase family. The type I restriction/modification system is composed of three polypeptides R, M and S.

The enzyme catalyses a 2'-deoxyadenosine in DNA + S-adenosyl-L-methionine = an N(6)-methyl-2'-deoxyadenosine in DNA + S-adenosyl-L-homocysteine + H(+). Functionally, the subtype gamma methyltransferase (M) subunit of a type I restriction enzyme. The M and S subunits together form a methyltransferase (MTase) that methylates A-3 on the top and A-2 on the bottom strand of the sequence 5'-CCAN(5)GTR-3'. In the presence of the R subunit the complex can also act as an endonuclease, binding to the same target sequence but cutting the DNA some distance from this site. Whether the DNA is cut or modified depends on the methylation state of the target sequence. When the target site is unmodified, the DNA is cut. When the target site is hemimethylated, the complex acts as a maintenance MTase modifying the DNA so that both strands become methylated. After locating a non-methylated recognition site, the enzyme complex serves as a molecular motor that translocates DNA in an ATP-dependent manner until a collision occurs that triggers cleavage. This Methanocaldococcus jannaschii (strain ATCC 43067 / DSM 2661 / JAL-1 / JCM 10045 / NBRC 100440) (Methanococcus jannaschii) protein is Type I restriction enzyme MjaIX methylase subunit.